An 852-amino-acid chain; its full sequence is Protein Shroom1 (852 aa).

Met-1 carries the post-translational modification N-acetylmethionine. Ser-18 is subject to Phosphoserine. 3 disordered regions span residues 34–54, 81–109, and 125–218; these read SSFS…GTDL, TSPR…PLNR, and AAQA…ANQQ. Thr-103 is subject to Phosphothreonine. Residues 125 to 144 are compositionally biased toward low complexity; that stretch reads AAQAAEPPSPPASRAAYRQR. Phosphoserine is present on residues Ser-133 and Ser-137. An ASD1 domain is found at 145-233; sequence LQGAQRRVLR…SEPGKLDRVG (89 aa). Over residues 152-164 the composition is skewed to basic and acidic residues; sequence VLRETSFQRKELR. Ser-166, Ser-190, and Ser-224 each carry phosphoserine. Disordered regions lie at residues 276–320, 399–431, 464–496, and 823–852; these read LPET…GSGG, MRSP…QRTG, SRPT…TAAE, and DLGH…LLLT. A compositionally biased stretch (polar residues) spans 279 to 289; sequence TQPQGSMNLDS. Over residues 301-313 the composition is skewed to low complexity; it reads ASRSRSASGEVLG. Polar residues predominate over residues 465–479; sequence RPTSHTPTGTANDNI. Residues 543-825 form the ASD2 domain; sequence EELVQELARL…QLDAIRDDLG (283 aa). The span at 830-852 shows a compositional bias: pro residues; sequence SPSPARPPGTCPPVQPPFPLLLT.

Belongs to the shroom family. As to quaternary structure, interacts with F-actin.

It is found in the cytoplasm. Its subcellular location is the cytoskeleton. Its function is as follows. May be involved in the assembly of microtubule arrays during cell elongation. The protein is Protein Shroom1 (SHROOM1) of Homo sapiens (Human).